A 352-amino-acid chain; its full sequence is DNA polymerase IV (352 aa).

A UmuC domain is found at 6-187 (IIHIDADCFY…VPVKFISGIG (182 aa)). Residues aspartate 10 and aspartate 105 each coordinate Mg(2+). Residue glutamate 106 is part of the active site.

The protein belongs to the DNA polymerase type-Y family. Monomer. Requires Mg(2+) as cofactor.

The protein localises to the cytoplasm. It catalyses the reaction DNA(n) + a 2'-deoxyribonucleoside 5'-triphosphate = DNA(n+1) + diphosphate. Poorly processive, error-prone DNA polymerase involved in untargeted mutagenesis. Copies undamaged DNA at stalled replication forks, which arise in vivo from mismatched or misaligned primer ends. These misaligned primers can be extended by PolIV. Exhibits no 3'-5' exonuclease (proofreading) activity. May be involved in translesional synthesis, in conjunction with the beta clamp from PolIII. This chain is DNA polymerase IV, found in Marinomonas sp. (strain MWYL1).